The following is a 280-amino-acid chain: Nucleotide-binding protein Swoo_4243 (280 aa).

8-15 (GRSGSGKS) provides a ligand contact to ATP. A GTP-binding site is contributed by 56-59 (DVRN).

It belongs to the RapZ-like family.

In terms of biological role, displays ATPase and GTPase activities. This chain is Nucleotide-binding protein Swoo_4243, found in Shewanella woodyi (strain ATCC 51908 / MS32).